The primary structure comprises 390 residues: Protein YghO (390 aa).

This is Protein YghO (yghO) from Escherichia coli (strain K12).